A 173-amino-acid chain; its full sequence is ATP synthase subunit b 1 (173 aa).

A helical membrane pass occupies residues 15–37 (TFWVTVAVLIFLAFFGRKIVGAI).

Belongs to the ATPase B chain family. In terms of assembly, F-type ATPases have 2 components, F(1) - the catalytic core - and F(0) - the membrane proton channel. F(1) has five subunits: alpha(3), beta(3), gamma(1), delta(1), epsilon(1). F(0) has three main subunits: a(1), b(2) and c(10-14). The alpha and beta chains form an alternating ring which encloses part of the gamma chain. F(1) is attached to F(0) by a central stalk formed by the gamma and epsilon chains, while a peripheral stalk is formed by the delta and b chains.

It is found in the cell inner membrane. F(1)F(0) ATP synthase produces ATP from ADP in the presence of a proton or sodium gradient. F-type ATPases consist of two structural domains, F(1) containing the extramembraneous catalytic core and F(0) containing the membrane proton channel, linked together by a central stalk and a peripheral stalk. During catalysis, ATP synthesis in the catalytic domain of F(1) is coupled via a rotary mechanism of the central stalk subunits to proton translocation. In terms of biological role, component of the F(0) channel, it forms part of the peripheral stalk, linking F(1) to F(0). The protein is ATP synthase subunit b 1 of Acidiphilium cryptum (strain JF-5).